Here is a 249-residue protein sequence, read N- to C-terminus: tRNA pseudouridine synthase A (249 aa).

D53 serves as the catalytic Nucleophile. Y111 provides a ligand contact to substrate.

It belongs to the tRNA pseudouridine synthase TruA family. In terms of assembly, homodimer.

The catalysed reaction is uridine(38/39/40) in tRNA = pseudouridine(38/39/40) in tRNA. Formation of pseudouridine at positions 38, 39 and 40 in the anticodon stem and loop of transfer RNAs. The chain is tRNA pseudouridine synthase A from Streptococcus suis (strain 98HAH33).